Here is a 383-residue protein sequence, read N- to C-terminus: Na(+)/H(+) antiporter NhaA (383 aa).

11 consecutive transmembrane segments (helical) span residues 14 to 34, 47 to 67, 87 to 107, 117 to 137, 146 to 166, 171 to 191, 205 to 225, 252 to 272, 280 to 300, 321 to 341, and 356 to 376; these read AGGILLVIAAAIAMTIANSPL, FGMSVSHWINDGLMAVFFLLI, IFPAIAAVGGMLAPALIYVAF, GWAIPAATDIAFALGIMALLG, VFLLALAIIDDLGVVVIIALF, LSSMALLVGFVMTGVLFMLNA, AILWFAVLKSGVHATLAGVVI, VAFGILPLFAFANAGISLEGV, MLPLGIALGLLIGKPLGIFSF, IFAVSVLCGIGFTMSIFISSL, and LGILMGSTTAAVLGYALLHFS.

The protein belongs to the NhaA Na(+)/H(+) (TC 2.A.33) antiporter family.

It is found in the cell inner membrane. It catalyses the reaction Na(+)(in) + 2 H(+)(out) = Na(+)(out) + 2 H(+)(in). It carries out the reaction Li(+)(in) + 2 H(+)(out) = Li(+)(out) + 2 H(+)(in). Activity is regulated by pH. Active at alkaline pH. Amiloride strongly reduces affinity for Na(+), but does not change the Vmax. In terms of biological role, na(+)/H(+) antiporter that extrudes sodium in exchange for external protons. Can also transport lithium and potassium. In Vibrio parahaemolyticus serotype O3:K6 (strain RIMD 2210633), this protein is Na(+)/H(+) antiporter NhaA.